A 743-amino-acid polypeptide reads, in one-letter code: NAD(P)H-quinone oxidoreductase subunit 5, chloroplastic (743 aa).

16 helical membrane-spanning segments follow: residues 9-29 (WIIPLVPLPVPMLIGVGLLFF), 40-60 (WAFISILLLSIVMIFSIDLSI), 89-109 (IDPLTSIMSILITTVGILVLI), 125-145 (FAYMSFFNASMLGLVTSSNFI), 147-167 (IYIFWELVGMCSYLLIGFWFT), 185-205 (GDFGLLLGILGLYWLTGSFEF), 219-239 (NEVNLLFVTLCAFLLFAGPVA), 258-278 (TPISALIHAATMVAAGIFLVA), 280-300 (LLPLFIVIPYAMNLISLIGII), 327-347 (LGYMMLALGMGSYRAALFHLI), 354-374 (ALLFLGSGSIIHSMEAIVGYF), 396-416 (TAFLVGTLSLCGIPPLACFWS), 425-445 (WLYSPIFATIAFFTAGLTAFY), 546-566 (ILFVMLVLVLFPLFVGAIGIP), 607-627 (LSVSITYFGILLAYFLYKPFY), and 721-741 (FYLLLYLFSLLFFLIFLFFFF).

Belongs to the complex I subunit 5 family. In terms of assembly, NDH is composed of at least 16 different subunits, 5 of which are encoded in the nucleus.

The protein localises to the plastid. Its subcellular location is the chloroplast thylakoid membrane. It carries out the reaction a plastoquinone + NADH + (n+1) H(+)(in) = a plastoquinol + NAD(+) + n H(+)(out). It catalyses the reaction a plastoquinone + NADPH + (n+1) H(+)(in) = a plastoquinol + NADP(+) + n H(+)(out). NDH shuttles electrons from NAD(P)H:plastoquinone, via FMN and iron-sulfur (Fe-S) centers, to quinones in the photosynthetic chain and possibly in a chloroplast respiratory chain. The immediate electron acceptor for the enzyme in this species is believed to be plastoquinone. Couples the redox reaction to proton translocation, and thus conserves the redox energy in a proton gradient. This Citrus sinensis (Sweet orange) protein is NAD(P)H-quinone oxidoreductase subunit 5, chloroplastic (ndhF).